The chain runs to 104 residues: Large ribosomal subunit protein uL24 (104 aa).

The protein belongs to the universal ribosomal protein uL24 family. As to quaternary structure, part of the 50S ribosomal subunit.

In terms of biological role, one of two assembly initiator proteins, it binds directly to the 5'-end of the 23S rRNA, where it nucleates assembly of the 50S subunit. Its function is as follows. One of the proteins that surrounds the polypeptide exit tunnel on the outside of the subunit. The sequence is that of Large ribosomal subunit protein uL24 from Chelativorans sp. (strain BNC1).